A 170-amino-acid chain; its full sequence is Urease accessory protein UreE (170 aa).

The disordered stretch occupies residues 144–170 (GGHSHDDHDHHHGHHEHDHEHHHHHHD). The segment covering 146 to 162 (HSHDDHDHHHGHHEHDH) has biased composition (basic and acidic residues).

The protein belongs to the UreE family.

It localises to the cytoplasm. Functionally, involved in urease metallocenter assembly. Binds nickel. Probably functions as a nickel donor during metallocenter assembly. This chain is Urease accessory protein UreE, found in Brucella anthropi (strain ATCC 49188 / DSM 6882 / CCUG 24695 / JCM 21032 / LMG 3331 / NBRC 15819 / NCTC 12168 / Alc 37) (Ochrobactrum anthropi).